An 889-amino-acid chain; its full sequence is Cytoplasmic aconitate hydratase (889 aa).

Substrate contacts are provided by residues Gln86 and 205–207 (DSH). Cys437, Cys503, and Cys506 together coordinate [4Fe-4S] cluster. Residues Arg536 and Arg541 each contribute to the substrate site. Thr628 carries the post-translational modification Phosphothreonine. Substrate is bound by residues Arg699 and 779–780 (SR).

It belongs to the aconitase/IPM isomerase family. Interacts (when associated with the 4Fe-4S) with FBXL5. Interacts with frataxin(81-210). It depends on [4Fe-4S] cluster as a cofactor.

Its subcellular location is the cytoplasm. It is found in the cytosol. The catalysed reaction is citrate = D-threo-isocitrate. In terms of biological role, bifunctional iron sensor that switches between 2 activities depending on iron availability. Iron deprivation, promotes its mRNA binding activity through which it regulates the expression of genes involved in iron uptake, sequestration and utilization. Binds to iron-responsive elements (IRES) in the untranslated region of target mRNAs preventing for instance the translation of ferritin and aminolevulinic acid synthase and stabilizing the transferrin receptor mRNA. Its function is as follows. Conversely, when cellular iron levels are high, binds a 4Fe-4S cluster which precludes RNA binding activity and promotes the aconitase activity, the isomerization of citrate to isocitrate via cis-aconitate. The polypeptide is Cytoplasmic aconitate hydratase (ACO1) (Homo sapiens (Human)).